The chain runs to 406 residues: ATP phosphoribosyltransferase regulatory subunit (406 aa).

This sequence belongs to the class-II aminoacyl-tRNA synthetase family. HisZ subfamily. Heteromultimer composed of HisG and HisZ subunits.

It localises to the cytoplasm. Its pathway is amino-acid biosynthesis; L-histidine biosynthesis; L-histidine from 5-phospho-alpha-D-ribose 1-diphosphate: step 1/9. Required for the first step of histidine biosynthesis. May allow the feedback regulation of ATP phosphoribosyltransferase activity by histidine. In Methylococcus capsulatus (strain ATCC 33009 / NCIMB 11132 / Bath), this protein is ATP phosphoribosyltransferase regulatory subunit.